The primary structure comprises 452 residues: UDP-N-acetylmuramoylalanine--D-glutamate ligase (452 aa).

Position 115 to 121 (glycine 115 to threonine 121) interacts with ATP.

The protein belongs to the MurCDEF family.

Its subcellular location is the cytoplasm. The catalysed reaction is UDP-N-acetyl-alpha-D-muramoyl-L-alanine + D-glutamate + ATP = UDP-N-acetyl-alpha-D-muramoyl-L-alanyl-D-glutamate + ADP + phosphate + H(+). The protein operates within cell wall biogenesis; peptidoglycan biosynthesis. Its function is as follows. Cell wall formation. Catalyzes the addition of glutamate to the nucleotide precursor UDP-N-acetylmuramoyl-L-alanine (UMA). The polypeptide is UDP-N-acetylmuramoylalanine--D-glutamate ligase (Geobacter sp. (strain M21)).